The following is a 157-amino-acid chain: Crossover junction endodeoxyribonuclease RuvC (157 aa).

Residues Asp-7, Glu-67, and Asp-140 contribute to the active site. Mg(2+) contacts are provided by Asp-7, Glu-67, and Asp-140.

It belongs to the RuvC family. Homodimer which binds Holliday junction (HJ) DNA. The HJ becomes 2-fold symmetrical on binding to RuvC with unstacked arms; it has a different conformation from HJ DNA in complex with RuvA. In the full resolvosome a probable DNA-RuvA(4)-RuvB(12)-RuvC(2) complex forms which resolves the HJ. It depends on Mg(2+) as a cofactor.

It is found in the cytoplasm. It catalyses the reaction Endonucleolytic cleavage at a junction such as a reciprocal single-stranded crossover between two homologous DNA duplexes (Holliday junction).. The RuvA-RuvB-RuvC complex processes Holliday junction (HJ) DNA during genetic recombination and DNA repair. Endonuclease that resolves HJ intermediates. Cleaves cruciform DNA by making single-stranded nicks across the HJ at symmetrical positions within the homologous arms, yielding a 5'-phosphate and a 3'-hydroxyl group; requires a central core of homology in the junction. The consensus cleavage sequence is 5'-(A/T)TT(C/G)-3'. Cleavage occurs on the 3'-side of the TT dinucleotide at the point of strand exchange. HJ branch migration catalyzed by RuvA-RuvB allows RuvC to scan DNA until it finds its consensus sequence, where it cleaves and resolves the cruciform DNA. The chain is Crossover junction endodeoxyribonuclease RuvC from Rickettsia africae (strain ESF-5).